A 504-amino-acid polypeptide reads, in one-letter code: Glucose-6-phosphate isomerase (504 aa).

The active-site Proton donor is the glutamate 333. Catalysis depends on residues histidine 364 and lysine 473.

The protein belongs to the GPI family.

Its subcellular location is the cytoplasm. It catalyses the reaction alpha-D-glucose 6-phosphate = beta-D-fructose 6-phosphate. Its pathway is carbohydrate biosynthesis; gluconeogenesis. The protein operates within carbohydrate degradation; glycolysis; D-glyceraldehyde 3-phosphate and glycerone phosphate from D-glucose: step 2/4. Its function is as follows. Catalyzes the reversible isomerization of glucose-6-phosphate to fructose-6-phosphate. This chain is Glucose-6-phosphate isomerase, found in Xanthomonas campestris pv. campestris (strain B100).